The chain runs to 138 residues: MINNIVLVGRMTKDAELRYTPSNQAVATFSLAVNRNFKNQSGEREADFINCVIWRQQAENLANWAKKGALVGITGRIQTRNYENQQGQRIYVTEVVAENFQLLESRNSQQQTNQSGNSSNSYFGNANKMDISDDDLPF.

The SSB domain occupies 1–104; it reads MINNIVLVGR…VVAENFQLLE (104 aa). Residues 105–121 show a composition bias toward low complexity; that stretch reads SRNSQQQTNQSGNSSNS. The interval 105–138 is disordered; the sequence is SRNSQQQTNQSGNSSNSYFGNANKMDISDDDLPF. The Important for interaction with partner proteins signature appears at 133-138; the sequence is DDDLPF.

Homotetramer.

Plays an important role in DNA replication, recombination and repair. Binds to ssDNA and to an array of partner proteins to recruit them to their sites of action during DNA metabolism. This chain is Single-stranded DNA-binding protein 3 (ssb3), found in Streptococcus agalactiae serotype V (strain ATCC BAA-611 / 2603 V/R).